The following is a 180-amino-acid chain: Trichosurin (180 aa).

The signal sequence occupies residues 1 to 15 (MKLLLLSMGLALVCG). 2 N-linked (GlcNAc...) asparagine glycosylation sites follow: Asn67 and Asn148. The cysteines at positions 87 and 180 are disulfide-linked.

This sequence belongs to the calycin superfamily. Lipocalin family. Homodimer. In terms of tissue distribution, milk.

The protein resides in the secreted. In Trichosurus vulpecula (Brush-tailed possum), this protein is Trichosurin.